We begin with the raw amino-acid sequence, 380 residues long: Phospho-N-acetylmuramoyl-pentapeptide-transferase (380 aa).

Transmembrane regions (helical) follow at residues 26–46, 75–95, 98–118, 135–155, 160–180, 183–203, 222–242, 259–279, 283–303, 311–331, and 357–377; these read IVAA…LFIE, MGGA…ADLG, LVWA…WDDW, LVLQ…DWQP, GFPF…PFVP, LFSP…VVAT, IVSS…IAGF, LGVF…YNTY, VFMG…LAVL, AILH…VWSF, and KIIV…LMSL.

Belongs to the glycosyltransferase 4 family. MraY subfamily. It depends on Mg(2+) as a cofactor.

It localises to the cell inner membrane. It carries out the reaction UDP-N-acetyl-alpha-D-muramoyl-L-alanyl-gamma-D-glutamyl-meso-2,6-diaminopimeloyl-D-alanyl-D-alanine + di-trans,octa-cis-undecaprenyl phosphate = di-trans,octa-cis-undecaprenyl diphospho-N-acetyl-alpha-D-muramoyl-L-alanyl-D-glutamyl-meso-2,6-diaminopimeloyl-D-alanyl-D-alanine + UMP. Its pathway is cell wall biogenesis; peptidoglycan biosynthesis. Its function is as follows. Catalyzes the initial step of the lipid cycle reactions in the biosynthesis of the cell wall peptidoglycan: transfers peptidoglycan precursor phospho-MurNAc-pentapeptide from UDP-MurNAc-pentapeptide onto the lipid carrier undecaprenyl phosphate, yielding undecaprenyl-pyrophosphoryl-MurNAc-pentapeptide, known as lipid I. In Anaeromyxobacter sp. (strain Fw109-5), this protein is Phospho-N-acetylmuramoyl-pentapeptide-transferase.